The chain runs to 547 residues: Mercuric reductase (547 aa).

The region spanning 5 to 70 is the HMA domain; that stretch reads APTELAITGM…AVVASGYGVH (66 aa). Residues Cys16 and Cys19 each contribute to the a metal cation site. Ala96 and Thr121 together coordinate FAD. A disulfide bond links Cys122 and Cys127. Residues Lys131, Ala197, Asp389, and Val397 each contribute to the FAD site. Positions 544 and 545 each coordinate Hg(2+).

It belongs to the class-I pyridine nucleotide-disulfide oxidoreductase family. Homodimer. It depends on FAD as a cofactor.

The catalysed reaction is Hg + NADP(+) + H(+) = Hg(2+) + NADPH. Its function is as follows. Resistance to Hg(2+) in bacteria appears to be governed by a specialized system which includes mercuric reductase. MerA protein is responsible for volatilizing mercury as Hg(0). The sequence is that of Mercuric reductase (merA) from Acidithiobacillus ferrooxidans (Thiobacillus ferrooxidans).